The chain runs to 119 residues: MARLVVVALLVLLCLSGLEAIQHAPKIQVYSRHPAENGKPNFLNCYVSGFHPSDIEVDLLKNGKKIEKVEHSDLSFSKDWSFYLLYYTEFTPNDKDEYACRVSDVTFTAPKTVKWDRNM.

The N-terminal stretch at 1–20 is a signal peptide; it reads MARLVVVALLVLLCLSGLEA. Positions 25 to 114 constitute an Ig-like C1-type domain; it reads PKIQVYSRHP…VTFTAPKTVK (90 aa). Cys45 and Cys100 form a disulfide bridge.

This sequence belongs to the beta-2-microglobulin family. As to quaternary structure, heterodimer of an alpha chain and a beta chain. Beta-2-microglobulin is the beta-chain of major histocompatibility complex class I molecules.

It is found in the secreted. Its function is as follows. Component of the class I major histocompatibility complex (MHC). Involved in the presentation of peptide antigens to the immune system. The polypeptide is Beta-2-microglobulin (B2M) (Chiropotes satanas (Brown-bearded saki)).